Here is a 372-residue protein sequence, read N- to C-terminus: GRASP65 homolog protein 1 (372 aa).

Residue Met1 is modified to N-acetylmethionine. 2 consecutive PDZ GRASP-type domains span residues 66–183 (SGLR…WTPL) and 188–276 (FTYH…YGFL). A GRASP region spans residues 66 to 292 (SGLRIVWVDE…KHCPQQAQQQ (227 aa)). Position 155 is a phosphoserine (Ser155). A disordered region spans residues 312-372 (VPSAFTAPPV…PPPQKQSSSD (61 aa)).

As to quaternary structure, homodimer. Interacts with BUG1 (via C-terminus), probably forming a heterooligomer consisting of a GRH1 dimer and a BUG1 dimer. Interacts with COPII coat components SEC23, SEC24, SFB2 and SFB3. N-terminal acetylation; by N-terminal acetyltransferase NatC.

The protein localises to the cytoplasm. It is found in the golgi apparatus. It localises to the cis-Golgi network membrane. Its function is as follows. Involved in the spindle assembly checkpoint. Involved in ER to Golgi vesicle-mediated transport by either facilitating USO1-dependent and -independent tethering or increasing target accuracy of fusion events of COPII-coated vesicles. This chain is GRASP65 homolog protein 1 (GRH1), found in Saccharomyces cerevisiae (strain ATCC 204508 / S288c) (Baker's yeast).